We begin with the raw amino-acid sequence, 438 residues long: Exoglucanase 3 (438 aa).

Positions 1–20 are cleaved as a signal peptide; sequence MFKFAALLALASLVPGFVQA. Residues 21–59 form the CBM1 domain; the sequence is QSPVWGQCGGNGWTGPTTCASGSTCVKQNDFYSQCLPNN. Intrachain disulfides connect cysteine 28-cysteine 45 and cysteine 39-cysteine 55. The segment at 57–90 is disordered; the sequence is PNNQAPPSTTTQPGTTPPATTTSGGTGPTSGAGN. Residues 60 to 87 form a linker region; the sequence is QAPPSTTTQPGTTPPATTTSGGTGPTSG. The segment covering 61 to 79 has biased composition (low complexity); sequence APPSTTTQPGTTPPATTTS. Positions 88-438 are catalytic; the sequence is AGNPYTGKTV…TLVANANPAL (351 aa). 2 disulfides stabilise this stretch: cysteine 170–cysteine 229 and cysteine 360–cysteine 407. The active-site Proton donor is aspartate 215. The active-site Nucleophile is the aspartate 393.

The protein belongs to the glycosyl hydrolase 6 (cellulase B) family.

It carries out the reaction Hydrolysis of (1-&gt;4)-beta-D-glucosidic linkages in cellulose and cellotetraose, releasing cellobiose from the non-reducing ends of the chains.. Shows enzymatic activity towards crystalline cellulose. At long reaction times. It is also able to degrade carboxymethyl cellulose and barley B-glucan. This Agaricus bisporus (White button mushroom) protein is Exoglucanase 3 (cel3).